Consider the following 159-residue polypeptide: Endoribonuclease YbeY (159 aa).

Zn(2+) is bound by residues histidine 125, histidine 129, and histidine 135.

The protein belongs to the endoribonuclease YbeY family. It depends on Zn(2+) as a cofactor.

The protein localises to the cytoplasm. Functionally, single strand-specific metallo-endoribonuclease involved in late-stage 70S ribosome quality control and in maturation of the 3' terminus of the 16S rRNA. This is Endoribonuclease YbeY from Enterococcus faecalis (strain ATCC 700802 / V583).